The sequence spans 421 residues: MASSSTWGLLLLAGLCCLVPISLAEGLQGHAVQETDVPRHDHEQHQEAACHRIAPNLADFAFSLYRQVARQSNTSNIFLSPVTIARAFAMLSLGTKGATHAEILEGLQFNLTEKAEAEIHEGFQHLLHTLNQPDNQLQLTTGNGLFIDEKAKLVPKFLEDVKNLYHSEAFSINFRDTEEAKKCINDYVEKGSQGKIVDLVDELDKDTVFALVNYIFFKGKWEKPFEVEQTTEEDFHVDEETTVKVPMMNRLGMFDLHHCDKLSSWVLLMDYVATATAFFILPDQGKLHQLEDMLTKEIRAKFLEKRYPSSANLHLPKLTISGTYDLKSLLGNLGITKVFSDEADLSGVTEEQPLKLSKALHRAVLTIDEKGTEATGATILEAIPMSIPPNVKFNKPFLFLIYDTKTKAVLFMGKVMNPTQK.

Positions 1-24 are cleaved as a signal peptide; it reads MASSSTWGLLLLAGLCCLVPISLA. Residues N73 and N110 are each glycosylated (N-linked (GlcNAc...) asparagine). The tract at residues 376–395 is RCL; the sequence is GATILEAIPMSIPPNVKFNK. S386 is modified (phosphoserine).

The protein belongs to the serpin family. As to quaternary structure, interacts with CELA2A. Interacts with ERGIC3 and LMAN1/ERGIC53. Interacts with PRSS1/Trypsin.

It is found in the secreted. Inhibitor of serine proteases. Its primary target is elastase, but it also has a moderate affinity for plasmin and thrombin. The protein is Alpha-1-antitrypsin (SERPINA1) of Sus scrofa (Pig).